Consider the following 62-residue polypeptide: Andropin (62 aa).

A signal peptide spans 1 to 22 (MKYFSVLVVLTLILAIVDQSDA).

Belongs to the andropin family. Ejaculatory duct of adult males.

It localises to the secreted. Male-specific peptide with moderate activity against Gram-positive bacteria. The sequence is that of Andropin (Anp) from Drosophila teissieri (Fruit fly).